The sequence spans 168 residues: Small ribosomal subunit protein bS16 (168 aa).

Residues Leu110–Ala168 are disordered. Over residues Ala129–Ala144 the composition is skewed to basic and acidic residues. The segment covering Glu153 to Ala168 has biased composition (acidic residues).

Belongs to the bacterial ribosomal protein bS16 family.

This is Small ribosomal subunit protein bS16 from Corynebacterium efficiens (strain DSM 44549 / YS-314 / AJ 12310 / JCM 11189 / NBRC 100395).